The following is a 116-amino-acid chain: Large ribosomal subunit protein bL19 (116 aa).

This sequence belongs to the bacterial ribosomal protein bL19 family.

This protein is located at the 30S-50S ribosomal subunit interface and may play a role in the structure and function of the aminoacyl-tRNA binding site. This is Large ribosomal subunit protein bL19 from Clostridium novyi (strain NT).